A 233-amino-acid chain; its full sequence is Cell surface glycoprotein gp42 (233 aa).

The signal sequence occupies residues 1 to 16; the sequence is MLLWMVLLLCVSMTEA. 2 consecutive Ig-like domains span residues 23-98 and 115-195; these read PVLS…GTIQ and PVLT…RDIS. N-linked (GlcNAc...) asparagine glycosylation is found at Asn-29, Asn-66, and Asn-181. 2 cysteine pairs are disulfide-bonded: Cys-40–Cys-88 and Cys-136–Cys-184. Gly-206 carries the GPI-anchor amidated glycine lipid modification. Residues 207-233 constitute a propeptide, removed in mature form; sequence TASMKSTTVVIWLPVSCLVGWPWLLRF.

In terms of tissue distribution, NK cells.

Its subcellular location is the cell membrane. The chain is Cell surface glycoprotein gp42 from Rattus norvegicus (Rat).